The sequence spans 287 residues: Probable endonuclease LCL3 (287 aa).

The interval 1-40 (MPWPFGPSGSSEAPPPQKPRDDKVEGREPAKSWNSLLPKP) is disordered. Positions 18–30 (KPRDDKVEGREPA) are enriched in basic and acidic residues. The chain crosses the membrane as a helical span at residues 50 to 67 (WAPVFLTAVGSLAAFMFY). Residues 88-246 (RSLLGRVTSV…KAKKLGLWSI (159 aa)) form the TNase-like domain. Residue R137 is part of the active site. Residue D142 participates in Ca(2+) binding. Active-site residues include E145 and R185. Residues 254–272 (PRDFKNRTQGNEKSERDVE) are compositionally biased toward basic and acidic residues. Residues 254-278 (PRDFKNRTQGNEKSERDVEGSTVQK) are disordered.

This sequence belongs to the LCL3 family.

The protein localises to the mitochondrion. The protein resides in the membrane. This Verticillium alfalfae (strain VaMs.102 / ATCC MYA-4576 / FGSC 10136) (Verticillium wilt of alfalfa) protein is Probable endonuclease LCL3 (LCL3).